We begin with the raw amino-acid sequence, 202 residues long: Small ribosomal subunit protein uS5 (202 aa).

Over residues M1–G13 the composition is skewed to gly residues. Residues M1–K31 form a disordered region. Positions S14 to S23 are enriched in basic and acidic residues. Residues Y34–V97 enclose the S5 DRBM domain.

This sequence belongs to the universal ribosomal protein uS5 family. Part of the 30S ribosomal subunit. Contacts proteins S4 and S8.

In terms of biological role, with S4 and S12 plays an important role in translational accuracy. Functionally, located at the back of the 30S subunit body where it stabilizes the conformation of the head with respect to the body. This is Small ribosomal subunit protein uS5 from Parafrankia sp. (strain EAN1pec).